The chain runs to 258 residues: Probable dihydroorotate dehydrogenase B (NAD(+)), electron transfer subunit (258 aa).

The 90-residue stretch at 1–90 folds into the FAD-binding FR-type domain; that stretch reads MRPISATIKE…RGPYGNGWEI (90 aa). The [2Fe-2S] cluster site is built by cysteine 210, cysteine 215, cysteine 218, and cysteine 228.

Belongs to the PyrK family. In terms of assembly, heterotetramer of 2 PyrK and 2 PyrD type B subunits. Requires [2Fe-2S] cluster as cofactor. The cofactor is FAD.

Its pathway is pyrimidine metabolism; UMP biosynthesis via de novo pathway; orotate from (S)-dihydroorotate (NAD(+) route): step 1/1. In terms of biological role, responsible for channeling the electrons from the oxidation of dihydroorotate from the FMN redox center in the PyrD type B subunit to the ultimate electron acceptor NAD(+). In Methanocella arvoryzae (strain DSM 22066 / NBRC 105507 / MRE50), this protein is Probable dihydroorotate dehydrogenase B (NAD(+)), electron transfer subunit.